The sequence spans 314 residues: tRNA uridine(34) hydroxylase (314 aa).

Residues alanine 140–serine 234 enclose the Rhodanese domain. The Cysteine persulfide intermediate role is filled by cysteine 194.

This sequence belongs to the TrhO family.

The enzyme catalyses uridine(34) in tRNA + AH2 + O2 = 5-hydroxyuridine(34) in tRNA + A + H2O. Functionally, catalyzes oxygen-dependent 5-hydroxyuridine (ho5U) modification at position 34 in tRNAs. This Acinetobacter baumannii (strain SDF) protein is tRNA uridine(34) hydroxylase.